The chain runs to 476 residues: WD repeat, SAM and U-box domain-containing protein 1 (476 aa).

7 WD repeats span residues 10 to 47, 52 to 91, 95 to 134, 137 to 176, 178 to 228, 237 to 276, and 279 to 318; these read DHGD…ELPH, FHTY…MLAV, PSGS…LYRC, VKDG…LHSE, AHDL…LGFE, GHCA…ILHT, and QHTR…LCQA. The SAM domain maps to 332–396; the sequence is WSEEDVSTWL…LRKIEELRTK (65 aa). A U-box domain is found at 403–476; it reads GIPDEFICPI…INRWLETHQK (74 aa). The residue at position 458 (Thr458) is a Phosphothreonine.

This is WD repeat, SAM and U-box domain-containing protein 1 (WDSUB1) from Homo sapiens (Human).